The following is a 199-amino-acid chain: Probable nicotinate-nucleotide adenylyltransferase (199 aa).

This sequence belongs to the NadD family.

The enzyme catalyses nicotinate beta-D-ribonucleotide + ATP + H(+) = deamido-NAD(+) + diphosphate. It functions in the pathway cofactor biosynthesis; NAD(+) biosynthesis; deamido-NAD(+) from nicotinate D-ribonucleotide: step 1/1. Catalyzes the reversible adenylation of nicotinate mononucleotide (NaMN) to nicotinic acid adenine dinucleotide (NaAD). This is Probable nicotinate-nucleotide adenylyltransferase from Leptospira interrogans serogroup Icterohaemorrhagiae serovar copenhageni (strain Fiocruz L1-130).